The chain runs to 61 residues: [Val1,Thr6]-bradykinyl-Gln,Ser (61 aa).

The first 22 residues, 1–22 (MSILKKSLFLVLFLGLVSFSIC), serve as a signal peptide directing secretion. Residues 23-50 (EEEKREAEEEENEDEIEEQSEEKKRFEP) constitute a propeptide that is removed on maturation. Residues 25 to 61 (EKREAEEEENEDEIEEQSEEKKRFEPVPPGFTPFRQS) are disordered. Over residues 30–42 (EEEENEDEIEEQS) the composition is skewed to acidic residues. Residue Pro52 is modified to 4-hydroxyproline; in form [Val1,Hyp2,Thr6]-Bradykinyl-Gln,Ser and [Val1,Hyp2,Thr6]-Bradykinin.

The protein belongs to the frog skin active peptide (FSAP) family. Bradykinin-related peptide subfamily. Expressed by the skin glands.

It is found in the secreted. Functionally, induces contraction of rat ileum smooth muscle (EC(50)=2.73 uM) but has no activity towards smooth muscle from tail artery, urinary bladder or uterus up to concentrations of 100 uM. Binds to both bradykinin receptor B1 (BDKRB1) and B2 (BDKRB2); the effect via BDKRB1 is stronger. In terms of biological role, [Val1,Hyp2,Thr6]-bradykinin-Gln,Ser: Induces contraction of rat ileum smooth muscle (EC(50)=710 nM) but has no activity towards smooth muscle from tail artery, urinary bladder or uterus up to concentrations of 100 uM. Binds to both bradykinin receptor B1 (BDKRB1) and B2 (BDKRB2); the effect via BDKRB1 is stronger. Induces contraction of guinea pig ileum smooth muscle. This Pithecopus hypochondrialis (Orange-legged leaf frog) protein is [Val1,Thr6]-bradykinyl-Gln,Ser.